Reading from the N-terminus, the 500-residue chain is Vitamin D(3) 25-hydroxylase (500 aa).

Residue cysteine 446 participates in heme binding.

The protein belongs to the cytochrome P450 family. Heme is required as a cofactor. Found in liver and kidney.

The protein localises to the endoplasmic reticulum membrane. The protein resides in the microsome membrane. It catalyses the reaction calciol + reduced [NADPH--hemoprotein reductase] + O2 = calcidiol + oxidized [NADPH--hemoprotein reductase] + H2O + H(+). The enzyme catalyses alfacalcidol + reduced [NADPH--hemoprotein reductase] + O2 = calcitriol + oxidized [NADPH--hemoprotein reductase] + H2O + H(+). It carries out the reaction dodecanoate + reduced [NADPH--hemoprotein reductase] + O2 = 12-hydroxydodecanoate + oxidized [NADPH--hemoprotein reductase] + H2O + H(+). The catalysed reaction is dodecanoate + reduced [NADPH--hemoprotein reductase] + O2 = 11-hydroxydodecanoate + oxidized [NADPH--hemoprotein reductase] + H2O + H(+). It catalyses the reaction 5beta-cholestane-3alpha,7alpha-diol + reduced [NADPH--hemoprotein reductase] + O2 = 5beta-cholestane-3alpha,7alpha,25-triol + oxidized [NADPH--hemoprotein reductase] + H2O + H(+). The enzyme catalyses 5beta-cholestane-3alpha,7alpha,12alpha-triol + reduced [NADPH--hemoprotein reductase] + O2 = 5beta-cholestane-3alpha,7alpha,12alpha,25-tetrol + oxidized [NADPH--hemoprotein reductase] + H2O + H(+). Catalyzes the 25-hydroxylation of vitamin D(3) (calciol), 1alpha-hydroxyvitamin D(3) (alphacalcidiol) and some C27 steroids. In addition the enzyme catalyzes the hydroxylation of positions 11 and 12 of dodecanoate. The chain is Vitamin D(3) 25-hydroxylase (CYP2D25) from Sus scrofa (Pig).